The primary structure comprises 181 residues: ATP synthase subunit delta (181 aa).

It belongs to the ATPase delta chain family. F-type ATPases have 2 components, F(1) - the catalytic core - and F(0) - the membrane proton channel. F(1) has five subunits: alpha(3), beta(3), gamma(1), delta(1), epsilon(1). F(0) has three main subunits: a(1), b(2) and c(10-14). The alpha and beta chains form an alternating ring which encloses part of the gamma chain. F(1) is attached to F(0) by a central stalk formed by the gamma and epsilon chains, while a peripheral stalk is formed by the delta and b chains.

It localises to the cell membrane. Its function is as follows. F(1)F(0) ATP synthase produces ATP from ADP in the presence of a proton or sodium gradient. F-type ATPases consist of two structural domains, F(1) containing the extramembraneous catalytic core and F(0) containing the membrane proton channel, linked together by a central stalk and a peripheral stalk. During catalysis, ATP synthesis in the catalytic domain of F(1) is coupled via a rotary mechanism of the central stalk subunits to proton translocation. In terms of biological role, this protein is part of the stalk that links CF(0) to CF(1). It either transmits conformational changes from CF(0) to CF(1) or is implicated in proton conduction. This chain is ATP synthase subunit delta, found in Mycoplasma capricolum subsp. capricolum (strain California kid / ATCC 27343 / NCTC 10154).